Here is a 189-residue protein sequence, read N- to C-terminus: MIHALNGKVESIENGKVYVNVNDLIYEIIVGDTGDFEEYINRNVKIYTKMVVNDDGISLYGFLEVIKLKLFEKLIGVNKLGPKSALKIISSNSVESVVSAIINEDVKALSSLPGIGPKTAERIVLELKDTIKELDVSINEKDRKVLEAIEALVTLGFNRNQAKKAVNKVAAKDDKLDDIIKKALRFLSR.

The interval 1-63 (MIHALNGKVE…DDGISLYGFL (63 aa)) is domain I. Residues 64–135 (EVIKLKLFEK…ELKDTIKELD (72 aa)) are domain II. The segment at 135 to 139 (DVSIN) is flexible linker. Positions 140 to 189 (EKDRKVLEAIEALVTLGFNRNQAKKAVNKVAAKDDKLDDIIKKALRFLSR) are domain III.

It belongs to the RuvA family. As to quaternary structure, homotetramer. Forms an RuvA(8)-RuvB(12)-Holliday junction (HJ) complex. HJ DNA is sandwiched between 2 RuvA tetramers; dsDNA enters through RuvA and exits via RuvB. An RuvB hexamer assembles on each DNA strand where it exits the tetramer. Each RuvB hexamer is contacted by two RuvA subunits (via domain III) on 2 adjacent RuvB subunits; this complex drives branch migration. In the full resolvosome a probable DNA-RuvA(4)-RuvB(12)-RuvC(2) complex forms which resolves the HJ.

The protein localises to the cytoplasm. Functionally, the RuvA-RuvB-RuvC complex processes Holliday junction (HJ) DNA during genetic recombination and DNA repair, while the RuvA-RuvB complex plays an important role in the rescue of blocked DNA replication forks via replication fork reversal (RFR). RuvA specifically binds to HJ cruciform DNA, conferring on it an open structure. The RuvB hexamer acts as an ATP-dependent pump, pulling dsDNA into and through the RuvAB complex. HJ branch migration allows RuvC to scan DNA until it finds its consensus sequence, where it cleaves and resolves the cruciform DNA. This Thermosipho africanus (strain TCF52B) protein is Holliday junction branch migration complex subunit RuvA.